The following is a 282-amino-acid chain: Probable endonuclease 4 (282 aa).

Zn(2+) is bound by residues H67, H107, E144, D178, H181, H215, D228, H230, and E260.

Belongs to the AP endonuclease 2 family. Zn(2+) is required as a cofactor.

The catalysed reaction is Endonucleolytic cleavage to 5'-phosphooligonucleotide end-products.. Its function is as follows. Endonuclease IV plays a role in DNA repair. It cleaves phosphodiester bonds at apurinic or apyrimidinic (AP) sites, generating a 3'-hydroxyl group and a 5'-terminal sugar phosphate. In Methanoculleus marisnigri (strain ATCC 35101 / DSM 1498 / JR1), this protein is Probable endonuclease 4.